The chain runs to 1017 residues: Probable DNA ligase (1017 aa).

A unknown region spans residues Met-1–Pro-363. The disordered stretch occupies residues Gly-326–Ala-352. Positions Asp-364–Asp-1017 are DNA ligase. Residue Glu-667 participates in ATP binding. Catalysis depends on Lys-669, which acts as the N6-AMP-lysine intermediate. Arg-674, Arg-689, Glu-717, Arg-860, and Lys-866 together coordinate ATP.

It in the C-terminal section; belongs to the ATP-dependent DNA ligase family. Mg(2+) is required as a cofactor.

The catalysed reaction is ATP + (deoxyribonucleotide)n-3'-hydroxyl + 5'-phospho-(deoxyribonucleotide)m = (deoxyribonucleotide)n+m + AMP + diphosphate.. Functionally, DNA ligase that seals nicks in double-stranded DNA during DNA replication, DNA recombination and DNA repair. The sequence is that of Probable DNA ligase (lig) from Opitutus terrae (strain DSM 11246 / JCM 15787 / PB90-1).